Reading from the N-terminus, the 1201-residue chain is uncharacterized protein (1201 aa).

Residues 140–160 traverse the membrane as a helical segment; that stretch reads IIINLIFFFAFIIVGIYLFKP. 2 coiled-coil regions span residues 420 to 459 and 536 to 574; these read QKKQLIIEEQIKLINAKIQQLERKLANIEVESLKSIAELN and AIKAIEKNEIQKFKKELLELEREKQEIRAQSLQVLITKM.

The protein localises to the cell membrane. This is an uncharacterized protein from Bacillus subtilis (strain 168).